A 534-amino-acid polypeptide reads, in one-letter code: Phosphoenolpyruvate carboxykinase (ATP) (534 aa).

Substrate is bound by residues arginine 58, tyrosine 194, and lysine 200. ATP contacts are provided by residues lysine 200, histidine 219, and 235 to 243; that span reads GLSGTGKTT. Positions 200 and 219 each coordinate Mn(2+). Aspartate 256 contacts Mn(2+). ATP is bound by residues glutamate 284, arginine 322, and threonine 449. Arginine 322 provides a ligand contact to substrate.

Belongs to the phosphoenolpyruvate carboxykinase (ATP) family. Requires Mn(2+) as cofactor.

Its subcellular location is the cytoplasm. It carries out the reaction oxaloacetate + ATP = phosphoenolpyruvate + ADP + CO2. The protein operates within carbohydrate biosynthesis; gluconeogenesis. Involved in the gluconeogenesis. Catalyzes the conversion of oxaloacetate (OAA) to phosphoenolpyruvate (PEP) through direct phosphoryl transfer between the nucleoside triphosphate and OAA. The polypeptide is Phosphoenolpyruvate carboxykinase (ATP) (Novosphingobium aromaticivorans (strain ATCC 700278 / DSM 12444 / CCUG 56034 / CIP 105152 / NBRC 16084 / F199)).